The primary structure comprises 976 residues: Collagen alpha-1(I) chain (976 aa).

The residue at position 1 (S1) is a Phosphoserine. The tract at residues 1–976 (SAGGISVPGP…PGPPGPPGPP (976 aa)) is disordered. 4-hydroxyproline is present on residues P20, P23, P26, P35, P38, P41, P55, P70, P76, P85, and P91. Residues 58-72 (NGDDGEAGKPGRPGE) show a composition bias toward basic and acidic residues. Position 94 is a 5-hydroxylysine; alternate (K94). O-linked (Gal...) hydroxylysine; alternate glycosylation occurs at K94. Residue S100 is modified to Phosphoserine. Low complexity-rich tracts occupy residues 108-118 (DAGPAGPKGAP) and 132-150 (PGASGPAGARGNDGATGAA). 4-hydroxyproline is present on residues P118, P132, P153, P162, P165, P192, P195, P207, P213, P222, P228, P231, and P246. Residues 152–164 (PPGPTGPAGPPGF) are compositionally biased toward pro residues. The segment covering 198–237 (AGAAGPAGNPGADGQPGAKGANGAPGIAGAPGFPGARGPS) has biased composition (low complexity). K249 is subject to 5-hydroxylysine. A 4-hydroxyproline mark is found at P255, P258, P266, P275, P290, P296, P304, and P310. Positions 294 to 308 (GLPGPGERGGPGSRG) are enriched in gly residues. The residue at position 319 (K319) is a 5-hydroxylysine. 4-hydroxyproline is present on residues P328, P337, P343, P349, P358, P361, P370, P379, P385, P397, P406, P415, P418, P436, P453, P459, P465, P471, P477, P483, P495, P504, P517, P523, and P532. Positions 352 to 378 (KGLTGSPGSPGPDGKTGPPGPAGQDGR) are enriched in low complexity. Positions 387-406 (ARGQAGVMGFPGPKGAAGEP) are enriched in low complexity. Low complexity predominate over residues 465 to 474 (PGEAGKPGEQ). Position 544 is a 5-hydroxylysine (K544). Residues P550, P565, and P571 each carry the 4-hydroxyproline modification. Over residues 577-591 (SGPSGPAGPTGARGA) the composition is skewed to low complexity. S580 carries the post-translational modification Phosphoserine. A 4-hydroxyproline mark is found at P592, P598, P601, P610, P616, P634, P643, and P652. The span at 604–631 (AGFAGPPGADGQPGAKGEPGDAGAKGDA) shows a compositional bias: low complexity. At K655 the chain carries 5-hydroxylysine. Over residues 660–676 (SAGPPGATGFPGAAGRV) the composition is skewed to low complexity. P664 and P670 each carry 4-hydroxyproline. The residue at position 678 (P678) is a 3-hydroxyproline. A 4-hydroxyproline mark is found at P679, P688, P691, P718, P726, P735, P753, P762, P765, P771, P786, P792, P798, P806, and P812. A compositionally biased stretch (low complexity) spans 723-735 (KGSPGADGPAGAP). The segment covering 785–795 (PPGPMGPPGLA) has biased composition (pro residues). K821 carries the 5-hydroxylysine modification. Residues 829-844 (PGPPGAPGAPGAPGPV) are compositionally biased toward pro residues. A 4-hydroxyproline mark is found at P832, P835, and P838. Low complexity predominate over residues 864-878 (AGPAGARGPAGPQGP). A compositionally biased stretch (basic and acidic residues) spans 879-893 (RGDKGETGEQGDRGI). Residue K882 is modified to 5-hydroxylysine. A 5-hydroxylysine; alternate modification is found at K894. Residue K894 is glycosylated (O-linked (Gal...) hydroxylysine; alternate). P907, P910, P928, and P943 each carry 4-hydroxyproline. Residues 910–943 (PGEQGPSGASGPAGPRGPPGSAGSPGKDGLNGLP) are compositionally biased toward low complexity. P948 is modified (3-hydroxyproline). The residue at position 949 (P949) is a 4-hydroxyproline. Pro residues predominate over residues 961–976 (VGPPGPPGPPGPPGPP). P963 bears the 3-hydroxyproline mark. At P964 the chain carries 4-hydroxyproline. P966 is modified (3-hydroxyproline). The residue at position 967 (P967) is a 4-hydroxyproline. 3-hydroxyproline is present on P969. A 4-hydroxyproline mark is found at P970, P973, and P976.

Belongs to the fibrillar collagen family. Trimers of one alpha 2(I) and two alpha 1(I) chains. Post-translationally, contains mostly 4-hydroxyproline. Proline residues at the third position of the tripeptide repeating unit (G-X-Y) are hydroxylated in some or all of the chains. In terms of processing, contains 3-hydroxyproline at a few sites. This modification occurs on the first proline residue in the sequence motif Gly-Pro-Hyp, where Hyp is 4-hydroxyproline. Lysine residues at the third position of the tripeptide repeating unit (G-X-Y) are 5-hydroxylated in some or all of the chains. Post-translationally, O-glycosylated on hydroxylated lysine residues. The O-linked glycan consists of a Glc-Gal disaccharide. Expressed in bones.

It localises to the secreted. It is found in the extracellular space. The protein resides in the extracellular matrix. In terms of biological role, type I collagen is a member of group I collagen (fibrillar forming collagen). This chain is Collagen alpha-1(I) chain, found in Acratocnus ye (Hispaniolan ground sloth).